A 244-amino-acid chain; its full sequence is uncharacterized protein (244 aa).

An FCP1 homology domain is found at 19-196 (ATDNRKLVIL…ACVIRYLKHL (178 aa)).

This is an uncharacterized protein from Schizosaccharomyces pombe (strain 972 / ATCC 24843) (Fission yeast).